A 365-amino-acid polypeptide reads, in one-letter code: 2-aminoethylphosphonate--pyruvate transaminase (365 aa).

Residue Lys-194 is modified to N6-(pyridoxal phosphate)lysine.

The protein belongs to the class-V pyridoxal-phosphate-dependent aminotransferase family. PhnW subfamily. In terms of assembly, homodimer. Pyridoxal 5'-phosphate serves as cofactor.

The enzyme catalyses (2-aminoethyl)phosphonate + pyruvate = phosphonoacetaldehyde + L-alanine. Its function is as follows. Involved in phosphonate degradation. The polypeptide is 2-aminoethylphosphonate--pyruvate transaminase (Bacillus cereus (strain ATCC 10987 / NRS 248)).